The sequence spans 552 residues: Rhodopsin kinase GRK7 (552 aa).

Ser36 bears the Phosphoserine; by PKA mark. The RGS domain maps to Phe56–Leu176. The Protein kinase domain occupies Phe191–Phe454. ATP is bound by residues Leu197–Val205 and Lys220. The Proton acceptor role is filled by Asp316. Positions Lys455–Glu520 constitute an AGC-kinase C-terminal domain. Cys549 bears the Cysteine methyl ester mark. Residue Cys549 is the site of S-geranylgeranyl cysteine attachment. Positions Leu550–Leu552 are cleaved as a propeptide — removed in mature form.

Belongs to the protein kinase superfamily. AGC Ser/Thr protein kinase family. GPRK subfamily. As to quaternary structure, interacts (when prenylated) with PDE6D; this promotes release from membranes. Post-translationally, autophosphorylated in vitro at Ser-490. Phosphorylation at Ser-36 is regulated by light and activated by cAMP.

The protein localises to the membrane. The catalysed reaction is L-threonyl-[rhodopsin] + ATP = O-phospho-L-threonyl-[rhodopsin] + ADP + H(+). It carries out the reaction L-seryl-[rhodopsin] + ATP = O-phospho-L-seryl-[rhodopsin] + ADP + H(+). Inhibited by phosphorylation of Ser-36. In terms of biological role, retina-specific kinase involved in the shutoff of the photoresponse and adaptation to changing light conditions via cone opsin phosphorylation, including rhodopsin (RHO). The polypeptide is Rhodopsin kinase GRK7 (GRK7) (Bos taurus (Bovine)).